Reading from the N-terminus, the 510-residue chain is O-acetyltransferase pyr7 (510 aa).

The protein belongs to the fumigaclavine B O-acetyltransferase family.

It functions in the pathway secondary metabolite biosynthesis; terpenoid biosynthesis. Functionally, O-acetyltransferase; part of the gene cluster that mediates the biosynthesis of pyripyropene A, a specific human acyl-coenzyme A:cholesterol acyltransferase 2 inhibitor. The first step of the pathway is the synthesis of nicotinyl-CoA from nicotinic acid by the nicotinic acid-CoA ligase pyr1. Nicotinyl-CoA is then a substrate of polyketide synthase pyr2 to produce 4-hydroxy-6-(3-pyridinyl)-2H-pyran-2-one (HPPO) which is further prenylated by the polyprenyl transferase pyr6 to yield farnesyl-HPPO. The next steps consist of an epoxidation of farnesyl-HPPO to epoxyfarnesyl-HPPO by FAD-dependent monooxygenase pyr5 and a cyclization of the terpenoid portion by the terpene cyclase pyr4 to yield deacetyl-pyripyropene E. The 2 cytochrome P450 monooxygenases pyr3 and pyr9, and the 2 acetyltransferases pyr7 and pyr8 are involved in the conversion of deacetyl-pyripyropene E into pyripyropene A through several cycles of oxidation and acetylation steps. Pyr7 acetylates deacetyl-pyripyropene E to pyripyropene E which is oxidized to 11-deacetyl-pyripyropene O by pyr3, which is in turn acetylated into pyripyropene O by pyr8. Pyripyropene O is then oxidized to deacetyl-pyripyropene A by pyr9. Deacetyl-pyripyropene A is finally acetylated to pyripyropene A by pyr8. The polypeptide is O-acetyltransferase pyr7 (Aspergillus fumigatus (strain ATCC MYA-4609 / CBS 101355 / FGSC A1100 / Af293) (Neosartorya fumigata)).